The following is a 391-amino-acid chain: MVKETEYYDILGIKPEATPTEIKKAYRRKAMETHPDKHPDDPDAQAKFQAVGEAYQVLSDPGLRSKYDQFGKEDAVPQQGFEDASEYFTAIFGGDGFKDWIGEFSLFKELNEATEMFGKEDEEGTAATETEKADESTDGGMVKHDTNKAESLKKDKLSKEQREKLMEMEKKRREDMMKQVDELAEKLNEKISRYLIAVKSNNLEEFTRKLDQEIEDLKLESFGLELLYLLARVYKTKANNFIMSKKTYGISKIFTGTRDNARSVKSAYNLLSTGLEAQKAMEKMSEVNTDELDQYERAKFESTMAGKALGVMWAMSKFELERKLKDVCNKILNDKKVPSKERIAKAKAMLFIAHKFASARRSPEEAEEARVFEELILGEQEKEHKKHTVAR.

The J domain maps to 4 to 73 (ETEYYDILGI…RSKYDQFGKE (70 aa)). Residues 119 to 161 (KEDEEGTAATETEKADESTDGGMVKHDTNKAESLKKDKLSKEQ) form a disordered region. Positions 129–161 (ETEKADESTDGGMVKHDTNKAESLKKDKLSKEQ) are enriched in basic and acidic residues. Residue Lys132 forms a Glycyl lysine isopeptide (Lys-Gly) (interchain with G-Cter in ubiquitin) linkage.

The chain is Protein CAJ1 (CAJ1) from Saccharomyces cerevisiae (strain ATCC 204508 / S288c) (Baker's yeast).